Consider the following 207-residue polypeptide: Fibroblast growth factor 18 (207 aa).

Residues 1–27 (MYSAPSACTCLCLHFLLLCFQVQVLAA) form the signal peptide. N39 is a glycosylation site (N-linked (GlcNAc...) asparagine). C109 and C127 are joined by a disulfide. Residue N137 is glycosylated (N-linked (GlcNAc...) asparagine). The interval 157 to 183 (GRPRKGPKTRENQQDVHFMKRYPKGQT) is disordered. Positions 164–174 (KTRENQQDVHF) are enriched in basic and acidic residues.

Belongs to the heparin-binding growth factors family. Interacts with FGFR3 and FGFR4. Mainly expressed in the lung. Not detected in brain, heart, liver, kidney and small intestine.

It is found in the secreted. Its function is as follows. Plays an important role in the regulation of cell proliferation, cell differentiation and cell migration. Required for normal ossification and bone development. Stimulates hepatic and intestinal proliferation. This Rattus norvegicus (Rat) protein is Fibroblast growth factor 18 (Fgf18).